Here is a 233-residue protein sequence, read N- to C-terminus: Leucyl/phenylalanyl-tRNA--protein transferase (233 aa).

This sequence belongs to the L/F-transferase family.

It is found in the cytoplasm. The enzyme catalyses N-terminal L-lysyl-[protein] + L-leucyl-tRNA(Leu) = N-terminal L-leucyl-L-lysyl-[protein] + tRNA(Leu) + H(+). It carries out the reaction N-terminal L-arginyl-[protein] + L-leucyl-tRNA(Leu) = N-terminal L-leucyl-L-arginyl-[protein] + tRNA(Leu) + H(+). The catalysed reaction is L-phenylalanyl-tRNA(Phe) + an N-terminal L-alpha-aminoacyl-[protein] = an N-terminal L-phenylalanyl-L-alpha-aminoacyl-[protein] + tRNA(Phe). Its function is as follows. Functions in the N-end rule pathway of protein degradation where it conjugates Leu, Phe and, less efficiently, Met from aminoacyl-tRNAs to the N-termini of proteins containing an N-terminal arginine or lysine. This chain is Leucyl/phenylalanyl-tRNA--protein transferase, found in Anaeromyxobacter dehalogenans (strain 2CP-C).